The sequence spans 297 residues: 3-mercaptopyruvate sulfurtransferase (297 aa).

Alanine 2 is subject to N-acetylalanine. In terms of domain architecture, Rhodanese 1 spans 25-144; that stretch reads SSQPLKLLDA…WLNQNLPISS (120 aa). Serine 35 carries the post-translational modification Phosphoserine. N6-acetyllysine; alternate is present on lysine 40. Position 40 is an N6-succinyllysine; alternate (lysine 40). Positions 145 to 160 are hinge; it reads GKSHSEPAEFSAQLDP. N6-succinyllysine is present on residues lysine 146 and lysine 164. A Rhodanese 2 domain is found at 174 to 288; sequence DARRFQVVDA…WYMRAQPEHI (115 aa). Arginine 188 contributes to the substrate binding site. The active-site Cysteine persulfide intermediate is the cysteine 248.

In terms of assembly, monomer (active form). Homodimer; disulfide-linked (inactive form). As to expression, expressed in the brain and retina. In the retina, localized to the inner and outer plexiform layer, the inner and outer nuclear layer and the outer segments of photoreceptors. In the brain, localized to neurons of mitral cell layers, glomerular, and external plexiform layers in the olfactory bulb. Also found in Purkinje cell stomata and proximal dendrites. In the spinal cord, localized to large neurons. In the cerebral cortex, localized to pyramidial neurons in layers II/III and V, and in layers I-VI of neocortical areas. In the hippocampus, found in CA1 and CA3 pyramidal cells.

The protein resides in the cytoplasm. It is found in the mitochondrion. It localises to the synapse. The protein localises to the synaptosome. It catalyses the reaction 2-oxo-3-sulfanylpropanoate + [thioredoxin]-dithiol = [thioredoxin]-disulfide + hydrogen sulfide + pyruvate + H(+). With respect to regulation, by oxidative stress, and thioredoxin. Under oxidative stress conditions, the catalytic cysteine site is converted to a sulfenate which inhibits the MPST enzyme activity. Reduced thioredoxin cleaves an intersubunit disulfide bond to turn on the redox switch and reactivate the enzyme. Inhibited by different oxidants, hydrogen peroxide and tetrathionate. Transfer of a sulfur ion to cyanide or to other thiol compounds. Also has weak rhodanese activity. Detoxifies cyanide and is required for thiosulfate biosynthesis. Acts as an antioxidant. In combination with cysteine aminotransferase (CAT), contributes to the catabolism of cysteine and is an important producer of hydrogen sulfide in the brain, retina and vascular endothelial cells. Hydrogen sulfide H(2)S is an important synaptic modulator, signaling molecule, smooth muscle contractor and neuroprotectant. Its production by the 3MST/CAT pathway is regulated by calcium ions. This chain is 3-mercaptopyruvate sulfurtransferase (Mpst), found in Mus musculus (Mouse).